A 1031-amino-acid chain; its full sequence is Zinc finger protein 445 (1031 aa).

The disordered stretch occupies residues 1–43; that stretch reads MPPGRWHAAYPAQAQSSRERGRLQTVKKEEEDESYTPVQAARP. The span at 17–29 shows a compositional bias: basic and acidic residues; it reads SRERGRLQTVKKE. A Glycyl lysine isopeptide (Lys-Gly) (interchain with G-Cter in SUMO1) cross-link involves residue Lys-28. Positions 55 to 137 constitute an SCAN box domain; that stretch reads RQLFRQLRYH…ALLEELQRDL (83 aa). Residues 234–304 enclose the KRAB domain; the sequence is MTFKDVEVTF…NMQAAQPKGN (71 aa). Glycyl lysine isopeptide (Lys-Gly) (interchain with G-Cter in SUMO2) cross-links involve residues Lys-317, Lys-374, Lys-375, and Lys-399. 3 consecutive C2H2-type zinc fingers follow at residues 485–507, 513–535, and 541–563; these read FKCS…QRLH, FKCR…EKIH, and YKCD…RETH. Lys-567 participates in a covalent cross-link: Glycyl lysine isopeptide (Lys-Gly) (interchain with G-Cter in SUMO2). 2 consecutive C2H2-type zinc fingers follow at residues 597–619 and 625–647; these read FDCS…QRIH and YKCT…MRLH. A Glycyl lysine isopeptide (Lys-Gly) (interchain with G-Cter in SUMO2) cross-link involves residue Lys-654. 2 consecutive C2H2-type zinc fingers follow at residues 681-703 and 709-731; these read FLCQ…QRIH and YQCS…KKKH. Residues Lys-736 and Lys-758 each participate in a glycyl lysine isopeptide (Lys-Gly) (interchain with G-Cter in SUMO2) cross-link. C2H2-type zinc fingers lie at residues 762 to 784, 790 to 812, 840 to 862, 868 to 890, and 896 to 918; these read YKCS…QRVH, YKCR…QRIH, FWCQ…KGIH, YKCN…QRIH, and FKCQ…QRKH. A disordered region spans residues 911 to 939; the sequence is LSSHQRKHTRAAQAERSPPARSSSQDTKL. Glycyl lysine isopeptide (Lys-Gly) (interchain with G-Cter in SUMO2) cross-links involve residues Lys-938, Lys-956, and Lys-975. 2 C2H2-type zinc fingers span residues 978–1000 and 1006–1028; these read HKCS…KRFH and FKCS…MKNH.

It belongs to the krueppel C2H2-type zinc-finger protein family.

Its subcellular location is the nucleus. In terms of biological role, transcription regulator required to maintain maternal and paternal gene imprinting, a process by which gene expression is restricted in a parent of origin-specific manner by epigenetic modification of genomic DNA and chromatin, including DNA methylation. Acts by controlling DNA methylation during the earliest multicellular stages of development at multiple imprinting control regions (ICRs). Acts together with ZFP57, but seems to be the major factor in human early embryonic imprinting maintenance. In contrast, in mice, ZFP57 plays the predominant role in imprinting maintenance. The polypeptide is Zinc finger protein 445 (Homo sapiens (Human)).